A 471-amino-acid polypeptide reads, in one-letter code: 6-phosphofructo-2-kinase/fructose-2,6-bisphosphatase 1 (471 aa).

N-acetylserine is present on Ser-2. Residues 2–250 (SREMGELTQT…AYYLMNIHVT (249 aa)) are 6-phosphofructo-2-kinase. At Ser-33 the chain carries Phosphoserine; by PKA. 49-57 (GLPARGKTY) is an ATP binding site. Residues Arg-82 and Arg-105 each coordinate beta-D-fructose 6-phosphate. Asp-131 is a catalytic residue. Positions 133 and 139 each coordinate beta-D-fructose 6-phosphate. Residue Ser-141 is modified to Phosphoserine. Cys-161 is an active-site residue. Residue 170–175 (NIKQVK) participates in ATP binding. Positions 175, 196, and 200 each coordinate beta-D-fructose 6-phosphate. Residues 251–471 (PRSIYLCRHG…EALDTVPAHY (221 aa)) form a fructose-2,6-bisphosphatase region. Arg-258 serves as a coordination point for beta-D-fructose 2,6-bisphosphate. His-259 (tele-phosphohistidine intermediate) is an active-site residue. Beta-D-fructose 2,6-bisphosphate is bound by residues Asn-265, Gly-271, and Arg-308. The active-site Proton donor/acceptor is Glu-328. Residues Tyr-339, Arg-353, Lys-357, Tyr-368, Gln-394, and Arg-398 each coordinate beta-D-fructose 2,6-bisphosphate. 350–353 (FALR) provides a ligand contact to ATP. Residues 394–398 (QAVMR) and Tyr-430 contribute to the ATP site.

This sequence in the C-terminal section; belongs to the phosphoglycerate mutase family. As to quaternary structure, homodimer. As to expression, liver.

It catalyses the reaction beta-D-fructose 2,6-bisphosphate + H2O = beta-D-fructose 6-phosphate + phosphate. It carries out the reaction beta-D-fructose 6-phosphate + ATP = beta-D-fructose 2,6-bisphosphate + ADP + H(+). Phosphorylation at Ser-33 inhibits the kinase and activates the bisphosphatase. Its function is as follows. Synthesis and degradation of fructose 2,6-bisphosphate. In Rattus norvegicus (Rat), this protein is 6-phosphofructo-2-kinase/fructose-2,6-bisphosphatase 1.